Consider the following 499-residue polypeptide: Bifunctional purine biosynthesis protein PurH (499 aa).

In terms of domain architecture, MGS-like spans 1–144 (MIKRALISVF…KNFKDVVVLT (144 aa)).

It belongs to the PurH family.

It carries out the reaction (6R)-10-formyltetrahydrofolate + 5-amino-1-(5-phospho-beta-D-ribosyl)imidazole-4-carboxamide = 5-formamido-1-(5-phospho-D-ribosyl)imidazole-4-carboxamide + (6S)-5,6,7,8-tetrahydrofolate. It catalyses the reaction IMP + H2O = 5-formamido-1-(5-phospho-D-ribosyl)imidazole-4-carboxamide. It participates in purine metabolism; IMP biosynthesis via de novo pathway; 5-formamido-1-(5-phospho-D-ribosyl)imidazole-4-carboxamide from 5-amino-1-(5-phospho-D-ribosyl)imidazole-4-carboxamide (10-formyl THF route): step 1/1. Its pathway is purine metabolism; IMP biosynthesis via de novo pathway; IMP from 5-formamido-1-(5-phospho-D-ribosyl)imidazole-4-carboxamide: step 1/1. The protein is Bifunctional purine biosynthesis protein PurH of Clostridium botulinum (strain Kyoto / Type A2).